The chain runs to 269 residues: Formamidopyrimidine-DNA glycosylase (269 aa).

Residue Pro-2 is the Schiff-base intermediate with DNA of the active site. Glu-3 serves as the catalytic Proton donor. Lys-57 serves as the catalytic Proton donor; for beta-elimination activity. DNA contacts are provided by His-90, Arg-109, and Lys-150. The FPG-type zinc finger occupies 235–269 (QVYGRKGEPCRICGMPVVGTKHAQRATFYCRQCQK). Residue Arg-259 is the Proton donor; for delta-elimination activity of the active site.

The protein belongs to the FPG family. As to quaternary structure, monomer. Requires Zn(2+) as cofactor.

It catalyses the reaction Hydrolysis of DNA containing ring-opened 7-methylguanine residues, releasing 2,6-diamino-4-hydroxy-5-(N-methyl)formamidopyrimidine.. The catalysed reaction is 2'-deoxyribonucleotide-(2'-deoxyribose 5'-phosphate)-2'-deoxyribonucleotide-DNA = a 3'-end 2'-deoxyribonucleotide-(2,3-dehydro-2,3-deoxyribose 5'-phosphate)-DNA + a 5'-end 5'-phospho-2'-deoxyribonucleoside-DNA + H(+). Involved in base excision repair of DNA damaged by oxidation or by mutagenic agents. Acts as a DNA glycosylase that recognizes and removes damaged bases. Has a preference for oxidized purines, such as 7,8-dihydro-8-oxoguanine (8-oxoG). Has AP (apurinic/apyrimidinic) lyase activity and introduces nicks in the DNA strand. Cleaves the DNA backbone by beta-delta elimination to generate a single-strand break at the site of the removed base with both 3'- and 5'-phosphates. The protein is Formamidopyrimidine-DNA glycosylase of Klebsiella pneumoniae subsp. pneumoniae (strain ATCC 700721 / MGH 78578).